Here is a 106-residue protein sequence, read N- to C-terminus: Thiosulfate sulfurtransferase GlpE (106 aa).

The Rhodanese domain maps to 17–105 (EQGEAKLVDI…WQRAQLPIVR (89 aa)). The active-site Cysteine persulfide intermediate is Cys65.

This sequence belongs to the GlpE family.

Its subcellular location is the cytoplasm. It carries out the reaction thiosulfate + hydrogen cyanide = thiocyanate + sulfite + 2 H(+). The enzyme catalyses thiosulfate + [thioredoxin]-dithiol = [thioredoxin]-disulfide + hydrogen sulfide + sulfite + 2 H(+). Functionally, transferase that catalyzes the transfer of sulfur from thiosulfate to thiophilic acceptors such as cyanide or dithiols. May function in a CysM-independent thiosulfate assimilation pathway by catalyzing the conversion of thiosulfate to sulfite, which can then be used for L-cysteine biosynthesis. The protein is Thiosulfate sulfurtransferase GlpE of Vibrio parahaemolyticus serotype O3:K6 (strain RIMD 2210633).